The chain runs to 193 residues: Zinc finger CCHC domain-containing protein 17 (193 aa).

The region spanning 1–40 (MSSCRVDKPSEIVDVGDKVWVKLIGREMKNDRIKVSLSMK) is the S1 motif; truncated domain. Ser66 carries the post-translational modification Phosphoserine. Residues 83 to 100 (TTCKKCGCKGHFAKDCFM) form a CCHC-type zinc finger. Residue Lys96 is modified to N6-acetyllysine. A disordered region spans residues 113–193 (EEEEKEEAKS…KKKHKKKHKE (81 aa)). Positions 118-129 (EEAKSAEFEKPV) are enriched in basic and acidic residues. A compositionally biased stretch (basic residues) spans 134-150 (PSRKRKKEKKKKKHRDR). The residue at position 135 (Ser135) is a Phosphoserine. Positions 163-177 (DTGKRARHTSKDSKA) are enriched in basic and acidic residues. Basic residues predominate over residues 178-193 (AKKKKKKKKHKKKHKE).

As to quaternary structure, may interact with PNN. May associate with the 60 S ribosomal subunit.

The protein localises to the nucleus. It is found in the nucleolus. In Macaca fascicularis (Crab-eating macaque), this protein is Zinc finger CCHC domain-containing protein 17 (ZCCHC17).